Consider the following 634-residue polypeptide: 1-deoxy-D-xylulose-5-phosphate synthase (634 aa).

Residues histidine 74 and alanine 115–serine 117 contribute to the thiamine diphosphate site. Aspartate 146 serves as a coordination point for Mg(2+). Thiamine diphosphate is bound by residues glycine 147–alanine 148, asparagine 176, tyrosine 283, and glutamate 365. Asparagine 176 is a Mg(2+) binding site.

This sequence belongs to the transketolase family. DXPS subfamily. In terms of assembly, homodimer. Requires Mg(2+) as cofactor. It depends on thiamine diphosphate as a cofactor.

It catalyses the reaction D-glyceraldehyde 3-phosphate + pyruvate + H(+) = 1-deoxy-D-xylulose 5-phosphate + CO2. It participates in metabolic intermediate biosynthesis; 1-deoxy-D-xylulose 5-phosphate biosynthesis; 1-deoxy-D-xylulose 5-phosphate from D-glyceraldehyde 3-phosphate and pyruvate: step 1/1. In terms of biological role, catalyzes the acyloin condensation reaction between C atoms 2 and 3 of pyruvate and glyceraldehyde 3-phosphate to yield 1-deoxy-D-xylulose-5-phosphate (DXP). This is 1-deoxy-D-xylulose-5-phosphate synthase from Burkholderia pseudomallei (strain 668).